A 286-amino-acid chain; its full sequence is tRNA (guanine-N(1)-)-methyltransferase (286 aa).

S-adenosyl-L-methionine is bound by residues G116 and I140–L145. Residues D232 to H286 are disordered.

This sequence belongs to the RNA methyltransferase TrmD family. In terms of assembly, homodimer.

Its subcellular location is the cytoplasm. It catalyses the reaction guanosine(37) in tRNA + S-adenosyl-L-methionine = N(1)-methylguanosine(37) in tRNA + S-adenosyl-L-homocysteine + H(+). Specifically methylates guanosine-37 in various tRNAs. The protein is tRNA (guanine-N(1)-)-methyltransferase of Acidothermus cellulolyticus (strain ATCC 43068 / DSM 8971 / 11B).